We begin with the raw amino-acid sequence, 146 residues long: ATP synthase epsilon chain (146 aa).

This sequence belongs to the ATPase epsilon chain family. In terms of assembly, F-type ATPases have 2 components, CF(1) - the catalytic core - and CF(0) - the membrane proton channel. CF(1) has five subunits: alpha(3), beta(3), gamma(1), delta(1), epsilon(1). CF(0) has three main subunits: a, b and c.

It localises to the cell membrane. In terms of biological role, produces ATP from ADP in the presence of a proton gradient across the membrane. This Lactobacillus delbrueckii subsp. bulgaricus (strain ATCC 11842 / DSM 20081 / BCRC 10696 / JCM 1002 / NBRC 13953 / NCIMB 11778 / NCTC 12712 / WDCM 00102 / Lb 14) protein is ATP synthase epsilon chain.